The primary structure comprises 297 residues: HTH-type transcriptional regulator ArgP (297 aa).

The HTH lysR-type domain occupies 4–60 (PDYRTLQALDAVIRERGFERAAQKLCITQSAVSQRIKQLENMFGQPLLVRTVPPRPT). Positions 21–40 (FERAAQKLCITQSAVSQRIK) form a DNA-binding region, H-T-H motif.

This sequence belongs to the LysR transcriptional regulatory family. Homodimer.

In terms of biological role, controls the transcription of genes involved in arginine and lysine metabolism. This is HTH-type transcriptional regulator ArgP from Enterobacter sp. (strain 638).